The sequence spans 303 residues: Elongation factor Ts (303 aa).

The interval 80–83 (TDFV) is involved in Mg(2+) ion dislocation from EF-Tu.

Belongs to the EF-Ts family.

The protein localises to the cytoplasm. Associates with the EF-Tu.GDP complex and induces the exchange of GDP to GTP. It remains bound to the aminoacyl-tRNA.EF-Tu.GTP complex up to the GTP hydrolysis stage on the ribosome. The protein is Elongation factor Ts of Clostridium perfringens (strain ATCC 13124 / DSM 756 / JCM 1290 / NCIMB 6125 / NCTC 8237 / Type A).